We begin with the raw amino-acid sequence, 423 residues long: Protein MANNAN SYNTHESIS-RELATED 2 (423 aa).

Residues M1 to R6 lie on the Cytoplasmic side of the membrane. The helical; Signal-anchor for type II membrane protein transmembrane segment at Q7–H26 threads the bilayer. Residues R27–C423 are Lumenal-facing. D264 to R266 is a substrate binding site.

Belongs to the glycosyltransferase GT106 family. As to expression, widely expressed.

It is found in the golgi apparatus membrane. Its pathway is glycan biosynthesis. In terms of biological role, glycosyltransferase involved in mannan biosynthesis. The chain is Protein MANNAN SYNTHESIS-RELATED 2 from Arabidopsis thaliana (Mouse-ear cress).